We begin with the raw amino-acid sequence, 418 residues long: Acyl-[acyl-carrier-protein] desaturase 4, chloroplastic (418 aa).

Residues 1–70 (MASSGLAVAA…ATAAAPADTA (70 aa)) constitute a chloroplast transit peptide. Glu-152, Glu-190, His-193, Glu-243, Glu-276, and His-279 together coordinate Fe cation.

It belongs to the fatty acid desaturase type 2 family. Homodimer. Fe(2+) is required as a cofactor.

It localises to the plastid. The protein resides in the chloroplast. The protein operates within lipid metabolism; fatty acid metabolism. Its function is as follows. Introduces a cis double bond in the acyl chain of an acyl-[acyl-carrier protein]. In Oryza sativa subsp. japonica (Rice), this protein is Acyl-[acyl-carrier-protein] desaturase 4, chloroplastic.